Here is a 498-residue protein sequence, read N- to C-terminus: ATP synthase subunit beta, chloroplastic (498 aa).

An ATP-binding site is contributed by 172 to 179 (GGAGVGKT).

Belongs to the ATPase alpha/beta chains family. F-type ATPases have 2 components, CF(1) - the catalytic core - and CF(0) - the membrane proton channel. CF(1) has five subunits: alpha(3), beta(3), gamma(1), delta(1), epsilon(1). CF(0) has four main subunits: a(1), b(1), b'(1) and c(9-12).

It localises to the plastid. The protein localises to the chloroplast thylakoid membrane. The catalysed reaction is ATP + H2O + 4 H(+)(in) = ADP + phosphate + 5 H(+)(out). Functionally, produces ATP from ADP in the presence of a proton gradient across the membrane. The catalytic sites are hosted primarily by the beta subunits. The protein is ATP synthase subunit beta, chloroplastic of Saccharum hybrid (Sugarcane).